The following is a 168-amino-acid chain: Protein GRE1 (168 aa).

Residues 1–168 (MSNLLNKFAD…DDDSGNQGVW (168 aa)) form a disordered region. 2 stretches are compositionally biased toward basic and acidic residues: residues 8 to 20 (FADK…HDER) and 27 to 43 (DQTR…REFR). Polar residues-rich tracts occupy residues 56-81 (NQGN…GNDF) and 120-144 (TSGQ…SNIG).

Its subcellular location is the cytoplasm. The polypeptide is Protein GRE1 (GRE1) (Saccharomyces cerevisiae (strain ATCC 204508 / S288c) (Baker's yeast)).